The primary structure comprises 158 residues: MVEKVPMTRGGHAALADELKKRQSVDRPRIIEQIAEARAHGDLSENAEYHAAKEEQSHNEGRIAELEDKLARADIIDVSKLSGDTIKFGATVTLIDEDTDKKAVWQIVGEAEADAKQGRISITSPLARALIGKKKGSSVEVVAPGGAKAYEIAKVEWR.

A coiled-coil region spans residues 47 to 74 (AEYHAAKEEQSHNEGRIAELEDKLARAD).

This sequence belongs to the GreA/GreB family.

Necessary for efficient RNA polymerase transcription elongation past template-encoded arresting sites. The arresting sites in DNA have the property of trapping a certain fraction of elongating RNA polymerases that pass through, resulting in locked ternary complexes. Cleavage of the nascent transcript by cleavage factors such as GreA or GreB allows the resumption of elongation from the new 3'terminus. GreA releases sequences of 2 to 3 nucleotides. This is Transcription elongation factor GreA from Nitrobacter winogradskyi (strain ATCC 25391 / DSM 10237 / CIP 104748 / NCIMB 11846 / Nb-255).